A 140-amino-acid chain; its full sequence is Sex-regulated protein janus-B (140 aa).

Residue R42 participates in substrate binding. The active-site Proton acceptor is the H69. 110 to 112 (SRT) serves as a coordination point for substrate.

It belongs to the janus family.

JanA and janB regulate somatic sex differentiation. The protein is Sex-regulated protein janus-B (janB) of Drosophila teissieri (Fruit fly).